The sequence spans 151 residues: Arginine regulator (151 aa).

It belongs to the ArgR family.

It localises to the cytoplasm. It functions in the pathway amino-acid degradation; L-arginine degradation via ADI pathway. Regulates the transcription of the arc operon, involved in arginine catabolism. The sequence is that of Arginine regulator (argR1) from Clostridium perfringens (strain 13 / Type A).